Reading from the N-terminus, the 432-residue chain is uncharacterized protein (432 aa).

SIS domains are found at residues Trp105–Ser244 and Cys277–Pro422.

This is an uncharacterized protein from Saccharomyces cerevisiae (strain Lalvin EC1118 / Prise de mousse) (Baker's yeast).